A 363-amino-acid polypeptide reads, in one-letter code: Neurogenic differentiation factor 2 (363 aa).

The interval 1–116 (MLTRLFKEPS…VRRQKANARE (116 aa)) is disordered. Over residues 28-44 (EDSKTKDEEQERCRLGD) the composition is skewed to basic and acidic residues. Residues 64–83 (AGEEDYDEDVDEDDCGEEGD) are compositionally biased toward acidic residues. A compositionally biased stretch (basic residues) spans 87 to 98 (PKKRGPKKRKMT). The Nuclear localization signal motif lies at 93-99 (KKRKMTP). One can recognise a bHLH domain in the interval 107–159 (VRRQKANARERTRMHDLNSALDNLLKVVPCYSKTQKLSKIETLRLAKNYIWAL).

Efficient DNA binding requires dimerization with another bHLH protein. In adult, expressed strongly in brain and more weakly in skin, muscle, eye and ovary.

Its subcellular location is the nucleus. Transcriptional regulator. Appears to mediate neuronal differentiation. In Danio rerio (Zebrafish), this protein is Neurogenic differentiation factor 2.